Reading from the N-terminus, the 274-residue chain is Large ribosomal subunit protein uL2c (274 aa).

The segment at 224–274 (NPVDHPHGGGEGRAPIGRKKPTTPWGYPALGRKSRKRNKYSEKFILRHRSK) is disordered.

The protein belongs to the universal ribosomal protein uL2 family. Part of the 50S ribosomal subunit.

It localises to the plastid. The protein resides in the chloroplast. In Ipomoea purpurea (Common morning glory), this protein is Large ribosomal subunit protein uL2c (rpl2).